Reading from the N-terminus, the 484-residue chain is Poly(A) polymerase alpha-B (484 aa).

The Nuclear localization signal 1 motif lies at 240 to 257 (RKQLHQLLPSHVLPKKKK). 3 disordered regions span residues 276 to 314 (SVDS…PVSL), 326 to 356 (VPQN…SSTP), and 375 to 484 (KPVT…RLNR). Positions 392–407 (KRTSSPTNEESPKKTK) match the Nuclear localization signal 2 motif. Residues 423–441 (EQNKLEPEELKEVHSEEKS) are compositionally biased toward basic and acidic residues. Residues 451 to 464 (SSQRSSSTDLSDIS) show a composition bias toward low complexity.

Belongs to the poly(A) polymerase family. Monomer.

Its subcellular location is the nucleus. The catalysed reaction is RNA(n) + ATP = RNA(n)-3'-adenine ribonucleotide + diphosphate. Functionally, polymerase that creates the 3'-poly(A) tail of mRNA's. May acquire specificity through interaction with a cleavage and polyadenylation factor (CPSF). The protein is Poly(A) polymerase alpha-B (papola-b) of Xenopus laevis (African clawed frog).